We begin with the raw amino-acid sequence, 148 residues long: Globin, monomeric component M-IV (148 aa).

Residues 2–147 enclose the Globin domain; that stretch reads GLSAAQRQVV…ISGALISGLQ (146 aa). Position 91 (His-91) interacts with heme b.

Monomer.

This is Globin, monomeric component M-IV from Glycera dibranchiata (Bloodworm).